Reading from the N-terminus, the 405-residue chain is Aminodeoxyfutalosine deaminase (405 aa).

Residues His61 and His63 each coordinate a divalent metal cation. Substrate-binding residues include Glu141, Ser145, and His179. His206 is a binding site for a divalent metal cation. Glu209 acts as the Proton donor in catalysis. Residue Asp306 coordinates a divalent metal cation.

This sequence belongs to the metallo-dependent hydrolases superfamily. A divalent metal cation serves as cofactor.

The enzyme catalyses 6-amino-6-deoxyfutalosine + H2O + H(+) = futalosine + NH4(+). It participates in quinol/quinone metabolism; menaquinone biosynthesis. Catalyzes the deamination of aminodeoxyfutalosine (AFL) into futalosine (FL), a step in the biosynthesis of menaquinone (MK, vitamin K2). To a lesser extent, can also deaminate 5'-methylthioadenosine. This chain is Aminodeoxyfutalosine deaminase, found in Nitratiruptor sp. (strain SB155-2).